We begin with the raw amino-acid sequence, 119 residues long: Ribonuclease P protein component (119 aa).

Belongs to the RnpA family. In terms of assembly, consists of a catalytic RNA component (M1 or rnpB) and a protein subunit.

It catalyses the reaction Endonucleolytic cleavage of RNA, removing 5'-extranucleotides from tRNA precursor.. In terms of biological role, RNaseP catalyzes the removal of the 5'-leader sequence from pre-tRNA to produce the mature 5'-terminus. It can also cleave other RNA substrates such as 4.5S RNA. The protein component plays an auxiliary but essential role in vivo by binding to the 5'-leader sequence and broadening the substrate specificity of the ribozyme. The protein is Ribonuclease P protein component of Serratia proteamaculans (strain 568).